We begin with the raw amino-acid sequence, 682 residues long: Heat shock 70 kDa protein 10, mitochondrial (682 aa).

The transit peptide at 1–50 (MATAALLRSIRRREVVSSPFSAYRCLSSSGKASLNSSYLGQNFRSFSRAF) directs the protein to the mitochondrion. Positions 646–682 (KIGEHMSGGSGGGSAPGGGSEGGSDQAPEAEYEEVKK) are disordered. Over residues 651 to 667 (MSGGSGGGSAPGGGSEG) the composition is skewed to gly residues. A compositionally biased stretch (acidic residues) spans 673–682 (PEAEYEEVKK).

Belongs to the heat shock protein 70 (TC 1.A.33) family. DnaK subfamily.

The protein resides in the mitochondrion. Functionally, chaperone involved in the maturation of iron-sulfur [Fe-S] cluster-containing proteins. Has a low intrinsic ATPase activity which is markedly stimulated by HSCB and ISU1. In cooperation with other chaperones, Hsp70s are key components that facilitate folding of de novo synthesized proteins, assist translocation of precursor proteins into organelles, and are responsible for degradation of damaged protein under stress conditions. The sequence is that of Heat shock 70 kDa protein 10, mitochondrial from Arabidopsis thaliana (Mouse-ear cress).